Here is a 137-residue protein sequence, read N- to C-terminus: Small heat shock protein IbpA (137 aa).

The 110-residue stretch at 28–137 (SQSNGGYPPY…ANKPRRIEIN (110 aa)) folds into the sHSP domain.

It belongs to the small heat shock protein (HSP20) family. Monomer. Forms homomultimers of about 100-150 subunits at optimal growth temperatures. Conformation changes to monomers at high temperatures or high ionic concentrations.

Its subcellular location is the cytoplasm. In terms of biological role, associates with aggregated proteins, together with IbpB, to stabilize and protect them from irreversible denaturation and extensive proteolysis during heat shock and oxidative stress. Aggregated proteins bound to the IbpAB complex are more efficiently refolded and reactivated by the ATP-dependent chaperone systems ClpB and DnaK/DnaJ/GrpE. Its activity is ATP-independent. The polypeptide is Small heat shock protein IbpA (Citrobacter koseri (strain ATCC BAA-895 / CDC 4225-83 / SGSC4696)).